The following is a 252-amino-acid chain: Large ribosomal subunit protein uL30 (252 aa).

It belongs to the universal ribosomal protein uL30 family.

In terms of biological role, binds to G-rich structures in 28S rRNA and in mRNAs. Plays a regulatory role in the translation apparatus; inhibits cell-free translation of mRNAs. In Drosophila melanogaster (Fruit fly), this protein is Large ribosomal subunit protein uL30 (RpL7).